The following is a 751-amino-acid chain: Protein CLMP1 (751 aa).

Basic residues predominate over residues 1-11; that stretch reads MGKSGGRKKKS. Residues 1 to 33 form a disordered region; that stretch reads MGKSGGRKKKSGGSNSNSSQVNSSETSGLSKPS. The segment covering 12–28 has biased composition (low complexity); it reads GGSNSNSSQVNSSETSG. TPR repeat units follow at residues 51-84, 89-124, and 125-158; these read AHEL…IPKS, AVFH…QPGF, and TRAL…DPNH. Positions 290 to 382 constitute a PB1 domain; that stretch reads WRPLKFVYDH…GMLRLHVVDV (93 aa). The disordered stretch occupies residues 386 to 443; the sequence is QEPMLLEEEEEEVEEKPVIEEVISSPTESLSETEINTEKTDKEVEKEKASSSEDPETK. The span at 390-399 shows a compositional bias: acidic residues; that stretch reads LLEEEEEEVE. Positions 409-419 are enriched in polar residues; that stretch reads SSPTESLSETE. A compositionally biased stretch (basic and acidic residues) spans 421–443; the sequence is NTEKTDKEVEKEKASSSEDPETK. TPR repeat units lie at residues 434–468, 481–514, and 536–570; these read ASSS…DPDA, SEAL…AFFN, and EVVA…KPDF. Over residues 630 to 648 the composition is skewed to basic and acidic residues; that stretch reads EQRMDDLKNPNSNKKEEVS. The segment at 630–663 is disordered; that stretch reads EQRMDDLKNPNSNKKEEVSKRRKKQGGDGNEEVS.

Interacts with myosin XI-K. As to expression, expressed in roots, stems, leaves, apex, flowers and seeds. Detected throughout the petiole in juvenile and young leaves, but restricted to the petiole midvein in older leaves. Expressed in hydathodes, at the base of the trichome, in the vascular cylinder of primary root and lateral root, in emerging lateral root primordia, in pollen and in developing embryos, but not in mature embryos.

It is found in the cytoplasm. In terms of biological role, required for plastid separation and partitioning during cell division. Not involved in plastid constriction or in the organization of cytoplasmic actin cables. Contributes to polar growth of root hairs. The sequence is that of Protein CLMP1 from Arabidopsis thaliana (Mouse-ear cress).